A 571-amino-acid polypeptide reads, in one-letter code: uncharacterized protein (571 aa).

Residues 1 to 25 (MAPSVATSLKAEILPSPRTSSPSSN) form a disordered region. Positions 135-389 (FSVFPAPILD…RGLHKNAFAT (255 aa)) constitute an FAD-binding FR-type domain. The interval 447-479 (NPLQKSSDDDASSTVSQQTETEMDSFEVKKDGT) is disordered.

It belongs to the flavoprotein pyridine nucleotide cytochrome reductase family. FAD serves as cofactor.

This is an uncharacterized protein from Schizosaccharomyces pombe (strain 972 / ATCC 24843) (Fission yeast).